Here is a 647-residue protein sequence, read N- to C-terminus: DNA polymerase subunit gamma-1 (647 aa).

The disordered stretch occupies residues 116 to 147 (ERPGRAEQSQMQDEDGLPELVEESSQPSFHHG). Residues 127–137 (QDEDGLPELVE) show a composition bias toward acidic residues.

The protein belongs to the DNA polymerase type-A family. As to quaternary structure, heterotrimer composed of a catalytic subunit and a homodimer of accessory subunits. Interacts with TTC3. The cofactor is Mg(2+).

The protein resides in the mitochondrion. Its subcellular location is the mitochondrion matrix. It is found in the mitochondrion nucleoid. The catalysed reaction is DNA(n) + a 2'-deoxyribonucleoside 5'-triphosphate = DNA(n+1) + diphosphate. Involved in the replication of mitochondrial DNA. Associates with mitochondrial DNA. In Gallus gallus (Chicken), this protein is DNA polymerase subunit gamma-1 (POLG).